We begin with the raw amino-acid sequence, 130 residues long: Protein NrdI (130 aa).

This sequence belongs to the NrdI family.

In terms of biological role, probably involved in ribonucleotide reductase function. In Staphylococcus carnosus (strain TM300), this protein is Protein NrdI.